The sequence spans 292 residues: 11-beta-hydroxysteroid dehydrogenase 1 (292 aa).

Residues 7 to 24 traverse the membrane as a helical segment; it reads YLLPILGIFLAYYYYSAN.

It belongs to the short-chain dehydrogenases/reductases (SDR) family. In terms of assembly, homodimer. As to expression, expressed highest in liver and ovaries (corpora lutea, granulosa cells, thecal, uterine caruncle and intercarunculer tissues), lower expression in kidney and spleen, and lowest in the adrenal.

The protein resides in the endoplasmic reticulum membrane. It catalyses the reaction an 11beta-hydroxysteroid + NADP(+) = an 11-oxosteroid + NADPH + H(+). The enzyme catalyses corticosterone + NADP(+) = 11-dehydrocorticosterone + NADPH + H(+). It carries out the reaction cortisone + NADPH + H(+) = cortisol + NADP(+). The catalysed reaction is a 7beta-hydroxysteroid + NADP(+) = a 7-oxosteroid + NADPH + H(+). It catalyses the reaction 7-oxocholesterol + NADPH + H(+) = 7beta-hydroxycholesterol + NADP(+). The enzyme catalyses chenodeoxycholate + NADP(+) = 7-oxolithocholate + NADPH + H(+). It carries out the reaction 7-oxolithocholate + NADPH + H(+) = ursodeoxycholate + NADP(+). The catalysed reaction is glycochenodeoxycholate + NADP(+) = 7-oxoglycolithocholate + NADPH + H(+). It catalyses the reaction taurochenodeoxycholate + NADP(+) = 7-oxotaurolithocholate + NADPH + H(+). The enzyme catalyses tauroursodeoxycholate + NADP(+) = 7-oxotaurolithocholate + NADPH + H(+). It carries out the reaction glycoursodeoxycholate + NADP(+) = 7-oxoglycolithocholate + NADPH + H(+). The catalysed reaction is 7-oxopregnenolone + NADPH + H(+) = 7beta-hydroxypregnenolone + NADP(+). It catalyses the reaction 3beta,7alpha-dihydroxyandrost-5-en-17-one + NADP(+) = 3beta-hydroxy-5-androstene-7,17-dione + NADPH + H(+). The enzyme catalyses 3beta-hydroxy-5-androstene-7,17-dione + NADPH + H(+) = 3beta,7beta-dihydroxyandrost-5-en-17-one + NADP(+). It carries out the reaction 3beta-hydroxy-5alpha-androstane-7,17-dione + NADPH + H(+) = 3beta,7beta-dihydroxy-5alpha-androstan-17-one + NADP(+). In terms of biological role, controls the reversible conversion of biologically active glucocorticoids such as cortisone to cortisol, and 11-dehydrocorticosterone to corticosterone in the presence of NADP(H). Participates in the corticosteroid receptor-mediated anti-inflammatory response, as well as metabolic and homeostatic processes. Plays a role in the secretion of aqueous humor in the eye, maintaining a normotensive, intraocular environment. Bidirectional in vitro, predominantly functions as a reductase in vivo, thereby increasing the concentration of active glucocorticoids. It has broad substrate specificity, besides glucocorticoids, it accepts other steroid and sterol substrates. Interconverts 7-oxo- and 7-hydroxy-neurosteroids such as 7-oxopregnenolone and 7beta-hydroxypregnenolone, 7-oxodehydroepiandrosterone (3beta-hydroxy-5-androstene-7,17-dione) and 7beta-hydroxydehydroepiandrosterone (3beta,7beta-dihydroxyandrost-5-en-17-one), among others. Catalyzes the stereo-specific conversion of the major dietary oxysterol, 7-ketocholesterol (7-oxocholesterol), into the more polar 7-beta-hydroxycholesterol metabolite. 7-oxocholesterol is one of the most important oxysterols, it participates in several events such as induction of apoptosis, accumulation in atherosclerotic lesions, lipid peroxidation, and induction of foam cell formation. Mediates the 7-oxo reduction of 7-oxolithocholate mainly to chenodeoxycholate, and to a lesser extent to ursodeoxycholate, both in its free form and when conjugated to glycine or taurine, providing a link between glucocorticoid activation and bile acid metabolism. Catalyzes the synthesis of 7-beta-25-dihydroxycholesterol from 7-oxo-25-hydroxycholesterol in vitro, which acts as a ligand for the G-protein-coupled receptor (GPCR) Epstein-Barr virus-induced gene 2 (EBI2) and may thereby regulate immune cell migration. In Bos taurus (Bovine), this protein is 11-beta-hydroxysteroid dehydrogenase 1.